A 552-amino-acid polypeptide reads, in one-letter code: Cytochrome P450 97B1, chloroplastic (552 aa).

The transit peptide at 1–52 directs the protein to the chloroplast; sequence MVAAPISTVKLTDANLHTRFHSSSSSTPSTLSLPLSLHFHFSSHSKRFSSIR. A heme-binding site is contributed by Cys-528.

Belongs to the cytochrome P450 family. It depends on heme as a cofactor.

The protein resides in the plastid. It is found in the chloroplast membrane. This chain is Cytochrome P450 97B1, chloroplastic (CYP97B1), found in Pisum sativum (Garden pea).